A 389-amino-acid polypeptide reads, in one-letter code: MKNLRKFPLVNLFNNYMIDAPEPSNINYFWNFGSLLATVLGIQILSGIFLAMFYTPHFDLAFLSVEHIMREVNYGWLIRYMHATGASFFFAFLYLHIARGLFYGSYRRPRTLTWTIGTAIFFLTILTAFLGYTLPNSQTSYWGATVITNLVSSIPFIGHDLVEFLWGGFNVNNATLNRFFSLHYLLPFIISALAIMHMIALHTNGSSNPLGITGNLDRIPMSPHYLIKDLVTIFLFFIIFSIIIFYFPTILSDADNAVPADPMKTPMSIVPEWYLLPFYAILRSIPNKLFGVIAMFFAIFILFFLPLLDFNYIRGNKFQPIGKLLFWCFISNFILLMFIGAKHVEIPYVAIGTYATLFYFAYFVFFIPLSSLISNTLLDLNQKSNSITK.

Helical transmembrane passes span 32–52 (FGSL…FLAM), 76–98 (WLIR…LHIA), 113–133 (TWTI…LGYT), and 179–199 (FFSL…MHMI). Residues His82 and His96 each coordinate heme b. His183 and His197 together coordinate heme b. His202 lines the a ubiquinone pocket. A run of 4 helical transmembrane segments spans residues 225-245 (YLIK…IIIF), 289-309 (LFGV…PLLD), 321-341 (IGKL…FIGA), and 348-368 (YVAI…FFIP).

Belongs to the cytochrome b family. As to quaternary structure, fungal cytochrome b-c1 complex contains 10 subunits; 3 respiratory subunits, 2 core proteins and 5 low-molecular weight proteins. Cytochrome b-c1 complex is a homodimer. It depends on heme b as a cofactor.

It localises to the mitochondrion inner membrane. Component of the ubiquinol-cytochrome c reductase complex (complex III or cytochrome b-c1 complex) that is part of the mitochondrial respiratory chain. The b-c1 complex mediates electron transfer from ubiquinol to cytochrome c. Contributes to the generation of a proton gradient across the mitochondrial membrane that is then used for ATP synthesis. This Schizosaccharomyces japonicus (Fission yeast) protein is Cytochrome b (cob).